Consider the following 91-residue polypeptide: MNASNWSVYLILCENSAFYCGISPNPQQRLAIHTAGKGAKYTRVFKPVAMRIVAGGMDKGTALKQEIAVKKLTAAQKRQLWEQAEKMPSET.

The 80-residue stretch at 4–83 folds into the GIY-YIG domain; the sequence is SNWSVYLILC…AAQKRQLWEQ (80 aa).

Belongs to the UPF0213 family.

The protein is UPF0213 protein NGO_1598 of Neisseria gonorrhoeae (strain ATCC 700825 / FA 1090).